The primary structure comprises 226 residues: 7-cyano-7-deazaguanine synthase (226 aa).

Residue isoleucine 7–threonine 17 coordinates ATP. Zn(2+) is bound by residues cysteine 187, cysteine 195, cysteine 198, and cysteine 201.

The protein belongs to the QueC family. Zn(2+) is required as a cofactor.

It catalyses the reaction 7-carboxy-7-deazaguanine + NH4(+) + ATP = 7-cyano-7-deazaguanine + ADP + phosphate + H2O + H(+). It participates in purine metabolism; 7-cyano-7-deazaguanine biosynthesis. In terms of biological role, catalyzes the ATP-dependent conversion of 7-carboxy-7-deazaguanine (CDG) to 7-cyano-7-deazaguanine (preQ(0)). The protein is 7-cyano-7-deazaguanine synthase of Chlorobium limicola (strain DSM 245 / NBRC 103803 / 6330).